The chain runs to 107 residues: Integration host factor subunit beta (107 aa).

A disordered region spans residues 56–107 (RPARVGRNPKSGEKVQVPEKFVPHFKPGKELRERVDGRAGEPLKADDPDDER). Basic and acidic residues predominate over residues 82–101 (PGKELRERVDGRAGEPLKAD).

The protein belongs to the bacterial histone-like protein family. As to quaternary structure, heterodimer of an alpha and a beta chain.

In terms of biological role, this protein is one of the two subunits of integration host factor, a specific DNA-binding protein that functions in genetic recombination as well as in transcriptional and translational control. The chain is Integration host factor subunit beta from Burkholderia vietnamiensis (strain G4 / LMG 22486) (Burkholderia cepacia (strain R1808)).